Here is a 242-residue protein sequence, read N- to C-terminus: Pyridoxine 5'-phosphate synthase (242 aa).

Asn-6 serves as a coordination point for 3-amino-2-oxopropyl phosphate. 8–9 lines the 1-deoxy-D-xylulose 5-phosphate pocket; that stretch reads DH. 3-amino-2-oxopropyl phosphate is bound at residue Arg-17. His-42 serves as the catalytic Proton acceptor. Arg-44 and His-49 together coordinate 1-deoxy-D-xylulose 5-phosphate. Glu-69 serves as the catalytic Proton acceptor. Position 99 (Thr-99) interacts with 1-deoxy-D-xylulose 5-phosphate. His-190 serves as the catalytic Proton donor. 3-amino-2-oxopropyl phosphate is bound by residues Gly-191 and 212 to 213; that span reads GH.

This sequence belongs to the PNP synthase family. As to quaternary structure, homooctamer; tetramer of dimers.

It localises to the cytoplasm. It carries out the reaction 3-amino-2-oxopropyl phosphate + 1-deoxy-D-xylulose 5-phosphate = pyridoxine 5'-phosphate + phosphate + 2 H2O + H(+). It participates in cofactor biosynthesis; pyridoxine 5'-phosphate biosynthesis; pyridoxine 5'-phosphate from D-erythrose 4-phosphate: step 5/5. Catalyzes the complicated ring closure reaction between the two acyclic compounds 1-deoxy-D-xylulose-5-phosphate (DXP) and 3-amino-2-oxopropyl phosphate (1-amino-acetone-3-phosphate or AAP) to form pyridoxine 5'-phosphate (PNP) and inorganic phosphate. The chain is Pyridoxine 5'-phosphate synthase from Neisseria meningitidis serogroup A / serotype 4A (strain DSM 15465 / Z2491).